The following is a 130-amino-acid chain: Large ribosomal subunit protein eL32 (130 aa).

Belongs to the eukaryotic ribosomal protein eL32 family. In terms of assembly, part of the 50S ribosomal subunit.

The chain is Large ribosomal subunit protein eL32 from Pyrococcus furiosus (strain ATCC 43587 / DSM 3638 / JCM 8422 / Vc1).